Consider the following 103-residue polypeptide: Large ribosomal subunit protein bL21 (103 aa).

This sequence belongs to the bacterial ribosomal protein bL21 family. Part of the 50S ribosomal subunit. Contacts protein L20.

Its function is as follows. This protein binds to 23S rRNA in the presence of protein L20. The chain is Large ribosomal subunit protein bL21 from Desulforapulum autotrophicum (strain ATCC 43914 / DSM 3382 / VKM B-1955 / HRM2) (Desulfobacterium autotrophicum).